The primary structure comprises 469 residues: Programmed cell death protein 4 (469 aa).

Met1 carries the N-acetylmethionine modification. Disordered stretches follow at residues 1-38 (MDVE…EIKN) and 58-128 (KAKR…GTPG). At Ser25 the chain carries Phosphoserine. The Nuclear localization signal motif lies at 58 to 64 (KAKRRLR). At Ser67 the chain carries Phosphoserine; by PKB and RPS6KB1. 4 positions are modified to phosphoserine: Ser68, Ser71, Ser76, and Ser78. The Phosphodegron signature appears at 70 to 76 (DSGRGDS). Positions 74–83 (GDSVSDNGSD) are enriched in low complexity. The segment covering 84–93 (TLRSGVTVPT) has biased composition (polar residues). Ser94 carries the post-translational modification Phosphoserine. Positions 114–125 (KKGGAGGKGVWG) are enriched in gly residues. The residue at position 152 (Tyr152) is a Phosphotyrosine. One can recognise an MI 1 domain in the interval 163 to 284 (AFEKTLTPII…CNTYIDSYKG (122 aa)). Phosphoserine occurs at positions 313 and 317. The region spanning 326 to 449 (HLVKEIDMLL…SKQLRDLCPS (124 aa)) is the MI 2 domain. The Nuclear localization signal motif lies at 448–454 (PSRGRKR). Position 457 is a phosphoserine; by PKB (Ser457).

Belongs to the PDCD4 family. As to quaternary structure, interacts (via MI domains) with EIF4A2. Interacts (via MI domains) with EIF4A1 (via N-terminal domain). Heterotrimer with EIF4A1; one molecule of PDCD4 binds two molecules of EIF4A1. Interacts with EIF4G1. May form a complex with EIF4A1 and EIF4G1. The interaction between PDCD4 and EIF4A1 interferes with the interaction between EIF4A1 and EIF4G. When phosphorylated, interacts with BTRC and FBXW11. Polyubiquitinated, leading to its proteasomal degradation. Rapidly degraded in response to mitogens. Phosphorylation of the phosphodegron promotes interaction with BTRC and proteasomal degradation. In terms of processing, phosphorylated at Ser-67 by RPS6KB1 in response to mitogens; phosphorylation promotes proteasomal degradation of PDCD4.

It is found in the nucleus. The protein localises to the cytoplasm. Functionally, inhibits translation initiation and cap-dependent translation. May excert its function by hindering the interaction between EIF4A1 and EIF4G. Inhibits the helicase activity of EIF4A. Modulates the activation of JUN kinase. Down-regulates the expression of MAP4K1, thus inhibiting events important in driving invasion, namely, MAPK85 activation and consequent JUN-dependent transcription. May play a role in apoptosis. Tumor suppressor. Inhibits tumor promoter-induced neoplastic transformation. Binds RNA. In Pongo abelii (Sumatran orangutan), this protein is Programmed cell death protein 4 (PDCD4).